The primary structure comprises 239 residues: Hydroxyacylglutathione hydrolase (239 aa).

Zn(2+) is bound by residues histidine 54, histidine 56, aspartate 58, histidine 59, histidine 112, aspartate 131, and histidine 169.

Belongs to the metallo-beta-lactamase superfamily. Glyoxalase II family. In terms of assembly, monomer. It depends on Zn(2+) as a cofactor.

The enzyme catalyses an S-(2-hydroxyacyl)glutathione + H2O = a 2-hydroxy carboxylate + glutathione + H(+). It functions in the pathway secondary metabolite metabolism; methylglyoxal degradation; (R)-lactate from methylglyoxal: step 2/2. Thiolesterase that catalyzes the hydrolysis of S-D-lactoyl-glutathione to form glutathione and D-lactic acid. The protein is Hydroxyacylglutathione hydrolase of Pelagibacter ubique (strain HTCC1062).